Reading from the N-terminus, the 662-residue chain is ABC transporter G family member 25 (662 aa).

The segment at 1 to 30 (MSAFDGVENQMNGPDSSPRLSQDPREPRSL) is disordered. A compositionally biased stretch (polar residues) spans 9 to 20 (NQMNGPDSSPRL). N-linked (GlcNAc...) asparagine glycosylation occurs at Asn-56. One can recognise an ABC transporter domain in the interval 69 to 308 (QKPSDETRST…FESVGFSPAF (240 aa)). Residue 101–108 (GPSGSGKS) coordinates ATP. Residue Asn-122 is glycosylated (N-linked (GlcNAc...) asparagine). The next 7 membrane-spanning stretches (helical) occupy residues 374 to 394 (VNGG…CILL), 406 to 426 (FDLL…LMWW), 437 to 457 (LGLL…NAVF), 489 to 509 (LSME…MVYL), 522 to 542 (VLLL…AAIM), 547 to 567 (ASTI…YYVN), and 629 to 649 (VIGD…FFGY). Positions 388–594 (SQLCILLHRL…CYRLLVAIQY (207 aa)) constitute an ABC transmembrane type-2 domain.

This sequence belongs to the ABC transporter superfamily. ABCG family. Eye pigment precursor importer (TC 3.A.1.204) subfamily. As to expression, mainly expressed in vascular tissues,predominantly in phloem companion cells, with highest levels in roots and seeds, and lower levels in seedlings, stems, leaves and flowers. Mostly observed in inflorescence meristems relative to cauline leaves and developing siliques. In seeds, mainly expressed in the endosperm and, to a lesser extent, in the embryo.

Its subcellular location is the cell membrane. The enzyme catalyses abscisate(in) + ATP + H2O = abscisate(out) + ADP + phosphate + H(+). With respect to regulation, ADP and vanadate (ABC transporters inhibitor) inhibit the ATP-dependent abscisic acid (ABA) uptake. High affinity abscisic acid (ABA) transporter that mediates the export of ABA, with a preference for (+)-ABA, through the plasma membrane, especially in vascular tissues (e.g. phloem companion cells), and is involved in the intercellular ABA signaling pathway. Together with ABCG31, export ABA from the endosperm to deliver it to the embryo via ABCG30 and ABCG40-mediated import to suppress radicle extension and subsequent embryonic growth. This chain is ABC transporter G family member 25, found in Arabidopsis thaliana (Mouse-ear cress).